The primary structure comprises 161 residues: CASP-like protein 1C2 (161 aa).

The Cytoplasmic segment spans residues 1 to 7; that stretch reads MAKNTDR. The chain crosses the membrane as a helical span at residues 8–28; that stretch reads ICFLVLRLLAFGATLSAAIVM. The Extracellular portion of the chain corresponds to 29 to 53; the sequence is ATSHERTTYLSLSIEAKYSHTPAFK. Residues 54–74 form a helical membrane-spanning segment; it reads YFVIANAIGSAYSLLLLFLPS. Residues 75-86 are Cytoplasmic-facing; the sequence is HGSLWPLVIASD. Residues 87-107 traverse the membrane as a helical segment; it reads VVITMFLTSSISAALSIAYVG. Topologically, residues 108-131 are extracellular; sequence KKGNSYAGWLPICDQVPNYCNHVT. Residues 132 to 152 form a helical membrane-spanning segment; the sequence is GALAAGFIGVVLYMVLLQYSI. Residues 153 to 161 are Cytoplasmic-facing; sequence YTKCCKSSS.

It belongs to the Casparian strip membrane proteins (CASP) family. Homodimer and heterodimers.

Its subcellular location is the cell membrane. This chain is CASP-like protein 1C2, found in Vitis vinifera (Grape).